The following is a 1649-amino-acid chain: eIF-2-alpha kinase GCN2 (1649 aa).

Disordered stretches follow at residues 1 to 25, 138 to 158, and 227 to 256; these read MAGG…RQDH, NKPP…QEEQ, and HGGS…YSVC. Residues 25-137 form the RWD domain; the sequence is HELQALEAIY…YHVQSFLSEH (113 aa). A coiled-coil region spans residues 146–205; sequence HEEMLERRAQEEQQRLLEAKRKEEQEQREILHEIQRRKEEIKEEKKRKEMAKQERLEIAS. Position 230 is a phosphoserine (Ser-230). Residues 237 to 249 are compositionally biased toward basic residues; it reads GKHRANSSGRSRR. Protein kinase domains follow at residues 296–539 and 590–1001; these read VYNA…HSFI and FEEL…SELL. Residues 596 to 604 and Lys-619 each bind ATP; that span reads LGKGAFGAV. Disordered stretches follow at residues 660–750 and 766–788; these read ERPA…QSFL and ENSK…ESEP. Thr-667 bears the Phosphothreonine mark. The segment covering 705 to 717 has biased composition (polar residues); that stretch reads LSSSVEWSTSGER. Residues 731-740 show a composition bias toward acidic residues; it reads SDDEDDDEDE. Over residues 778-787 the composition is skewed to basic and acidic residues; sequence NEKNGCHESE. The Proton acceptor role is filled by Asp-848. Thr-871 bears the Phosphothreonine mark. Phosphothreonine; by autocatalysis occurs at positions 899 and 904. Positions 1022-1493 are histidyl-tRNA synthetase-like; that stretch reads VDGKAYRTMM…DHVLQKLRTK (472 aa). Lys-1259 carries the post-translational modification N6-acetyllysine.

This sequence belongs to the protein kinase superfamily. Ser/Thr protein kinase family. GCN2 subfamily. In terms of assembly, homodimer; homodimerization is important for kinase activation by uncharged tRNAs. Interacts with GCN1; this interaction stimulates EIF2AK4/GCN2 kinase activity and is impaired by IMPACT upon a variety of stress conditions, such as amino acid depletion, UV-C irradiation, proteasome inhibitor treatment and glucose deprivation. Interacts with DNAJC3; this interaction inhibits EIF2AK4/GCN2 kinase activity during endoplasmic reticulum (ER), hypothermic and amino acid-starving stress conditions. Interacts with MAP3K20; activates EIF2AK4/GCN2 kinase activity in response to moderate ribotoxic stress. As to quaternary structure, (Microbial infection) Interacts with hepatitis E virus (HEV) ORF1 protease; this interaction inhibits dimerization of EIF2AK4 and prevents EIF2AK4-mediated phosphorylation of EIF2A. In terms of processing, autophosphorylated; autophosphorylation on Thr-899 is increased upon amino acid starvation and in UV irradiation cells and inhibited in presence of IMPACT. As to expression, widely expressed. Expressed in lung, smooth muscle cells and macrophages.

The protein localises to the cytoplasm. The enzyme catalyses L-seryl-[protein] + ATP = O-phospho-L-seryl-[protein] + ADP + H(+). It carries out the reaction L-threonyl-[protein] + ATP = O-phospho-L-threonyl-[protein] + ADP + H(+). Its function is as follows. Metabolic-stress sensing protein kinase that phosphorylates the alpha subunit of eukaryotic translation initiation factor 2 (EIF2S1/eIF-2-alpha) in response to low amino acid availability. Plays a role as an activator of the integrated stress response (ISR) required for adaptation to amino acid starvation. EIF2S1/eIF-2-alpha phosphorylation in response to stress converts EIF2S1/eIF-2-alpha into a global protein synthesis inhibitor, leading to a global attenuation of cap-dependent translation, and thus to a reduced overall utilization of amino acids, while concomitantly initiating the preferential translation of ISR-specific mRNAs, such as the transcriptional activator ATF4, and hence allowing ATF4-mediated reprogramming of amino acid biosynthetic gene expression to alleviate nutrient depletion. Binds uncharged tRNAs. Required for the translational induction of protein kinase PRKCH following amino acid starvation. Involved in cell cycle arrest by promoting cyclin D1 mRNA translation repression after the unfolded protein response pathway (UPR) activation or cell cycle inhibitor CDKN1A/p21 mRNA translation activation in response to amino acid deprivation. Plays a role in the consolidation of synaptic plasticity, learning as well as formation of long-term memory. Plays a role in neurite outgrowth inhibition. Plays a proapoptotic role in response to glucose deprivation. Promotes global cellular protein synthesis repression in response to UV irradiation independently of the stress-activated protein kinase/c-Jun N-terminal kinase (SAPK/JNK) and p38 MAPK signaling pathways. Plays a role in the antiviral response against alphavirus infection; impairs early viral mRNA translation of the incoming genomic virus RNA, thus preventing alphavirus replication. In terms of biological role, (Microbial infection) Plays a role in modulating the adaptive immune response to yellow fever virus infection; promotes dendritic cells to initiate autophagy and antigene presentation to both CD4(+) and CD8(+) T-cells under amino acid starvation. The chain is eIF-2-alpha kinase GCN2 from Homo sapiens (Human).